A 290-amino-acid chain; its full sequence is Lipoyl synthase (290 aa).

7 residues coordinate [4Fe-4S] cluster: cysteine 36, cysteine 41, cysteine 47, cysteine 62, cysteine 66, cysteine 69, and serine 275. The Radical SAM core domain maps to phenylalanine 48 to serine 264.

The protein belongs to the radical SAM superfamily. Lipoyl synthase family. [4Fe-4S] cluster serves as cofactor.

The protein resides in the cytoplasm. The catalysed reaction is [[Fe-S] cluster scaffold protein carrying a second [4Fe-4S](2+) cluster] + N(6)-octanoyl-L-lysyl-[protein] + 2 oxidized [2Fe-2S]-[ferredoxin] + 2 S-adenosyl-L-methionine + 4 H(+) = [[Fe-S] cluster scaffold protein] + N(6)-[(R)-dihydrolipoyl]-L-lysyl-[protein] + 4 Fe(3+) + 2 hydrogen sulfide + 2 5'-deoxyadenosine + 2 L-methionine + 2 reduced [2Fe-2S]-[ferredoxin]. It participates in protein modification; protein lipoylation via endogenous pathway; protein N(6)-(lipoyl)lysine from octanoyl-[acyl-carrier-protein]: step 2/2. Functionally, catalyzes the radical-mediated insertion of two sulfur atoms into the C-6 and C-8 positions of the octanoyl moiety bound to the lipoyl domains of lipoate-dependent enzymes, thereby converting the octanoylated domains into lipoylated derivatives. The chain is Lipoyl synthase from Alkaliphilus metalliredigens (strain QYMF).